Reading from the N-terminus, the 434-residue chain is uncharacterized protein (434 aa).

The first 17 residues, 1 to 17 (MTFLLFQLLVLLRYSIG), serve as a signal peptide directing secretion. 12 helical membrane-spanning segments follow: residues 48–68 (AAIS…FTVL), 70–90 (EWVY…SVTA), 112–132 (YRVA…FTIF), 141–161 (TYGT…NAVV), 173–193 (WITG…RLVT), 206–226 (YGVH…TSFV), 232–252 (YCGL…LSGL), 271–291 (EGVY…HLGY), 305–325 (TSSI…TILF), 344–364 (WVLA…YIPL), 380–400 (ATFL…DTIF), and 404–424 (FSSL…IGTI).

Its subcellular location is the membrane. This is an uncharacterized protein from Arabidopsis thaliana (Mouse-ear cress).